The sequence spans 127 residues: Small ribosomal subunit protein uS12 (127 aa).

Aspartate 89 is subject to 3-methylthioaspartic acid.

It belongs to the universal ribosomal protein uS12 family. In terms of assembly, part of the 30S ribosomal subunit. Contacts proteins S8 and S17. May interact with IF1 in the 30S initiation complex.

With S4 and S5 plays an important role in translational accuracy. In terms of biological role, interacts with and stabilizes bases of the 16S rRNA that are involved in tRNA selection in the A site and with the mRNA backbone. Located at the interface of the 30S and 50S subunits, it traverses the body of the 30S subunit contacting proteins on the other side and probably holding the rRNA structure together. The combined cluster of proteins S8, S12 and S17 appears to hold together the shoulder and platform of the 30S subunit. The chain is Small ribosomal subunit protein uS12 from Akkermansia muciniphila (strain ATCC BAA-835 / DSM 22959 / JCM 33894 / BCRC 81048 / CCUG 64013 / CIP 107961 / Muc).